A 485-amino-acid polypeptide reads, in one-letter code: Pelle-like serine/threonine-protein kinase pik-1 (485 aa).

Polar residues predominate over residues 115-132 (TSRVSKQMVQPPGSQSAS). The interval 115-155 (TSRVSKQMVQPPGSQSASRLKKTEIKESSPSPAAAAASQLS) is disordered. A compositionally biased stretch (low complexity) spans 142-152 (SSPSPAAAAAS). Residues 185 to 485 (FAVSNVIGKG…LCKNSIPPVV (301 aa)) enclose the Protein kinase domain. ATP is bound by residues 191-199 (IGKGGYGTV) and K214. D318 serves as the catalytic Proton acceptor.

It belongs to the protein kinase superfamily. TKL Ser/Thr protein kinase family. Pelle subfamily. In terms of assembly, interacts with actl-1. Expressed in the nervous system.

It catalyses the reaction L-seryl-[protein] + ATP = O-phospho-L-seryl-[protein] + ADP + H(+). The catalysed reaction is L-threonyl-[protein] + ATP = O-phospho-L-threonyl-[protein] + ADP + H(+). Functionally, through association with the adapter actl-1, may act downstream of the receptor complex composed of ilcr-1 and ilcr-2, which is a signaling complex that modulates neuronal activity and animal behavior in response to sensory neuron input. The sequence is that of Pelle-like serine/threonine-protein kinase pik-1 from Caenorhabditis elegans.